The chain runs to 256 residues: Ubiquinone/menaquinone biosynthesis C-methyltransferase UbiE (256 aa).

Positions 1-12 (MNDQRKGDHAEP) are enriched in basic and acidic residues. The tract at residues 1 to 22 (MNDQRKGDHAEPTTHFGYQDVP) is disordered. Residues Thr79, Asp100, and 128 to 129 (DA) each bind S-adenosyl-L-methionine.

Belongs to the class I-like SAM-binding methyltransferase superfamily. MenG/UbiE family.

The enzyme catalyses a 2-demethylmenaquinol + S-adenosyl-L-methionine = a menaquinol + S-adenosyl-L-homocysteine + H(+). It catalyses the reaction a 2-methoxy-6-(all-trans-polyprenyl)benzene-1,4-diol + S-adenosyl-L-methionine = a 5-methoxy-2-methyl-3-(all-trans-polyprenyl)benzene-1,4-diol + S-adenosyl-L-homocysteine + H(+). The protein operates within quinol/quinone metabolism; menaquinone biosynthesis; menaquinol from 1,4-dihydroxy-2-naphthoate: step 2/2. It participates in cofactor biosynthesis; ubiquinone biosynthesis. In terms of biological role, methyltransferase required for the conversion of demethylmenaquinol (DMKH2) to menaquinol (MKH2) and the conversion of 2-polyprenyl-6-methoxy-1,4-benzoquinol (DDMQH2) to 2-polyprenyl-3-methyl-6-methoxy-1,4-benzoquinol (DMQH2). The protein is Ubiquinone/menaquinone biosynthesis C-methyltransferase UbiE of Pseudomonas putida (Arthrobacter siderocapsulatus).